The primary structure comprises 502 residues: AMP phosphorylase (502 aa).

AMP-binding positions include Gly-168, 195 to 200 (SRAITS), and Thr-204. The Proton donor role is filled by Asp-257. AMP-binding residues include Ser-265 and Lys-289.

Belongs to the thymidine/pyrimidine-nucleoside phosphorylase family. Type 2 subfamily.

The catalysed reaction is AMP + phosphate = alpha-D-ribose 1,5-bisphosphate + adenine. It catalyses the reaction CMP + phosphate = cytosine + alpha-D-ribose 1,5-bisphosphate. The enzyme catalyses UMP + phosphate = alpha-D-ribose 1,5-bisphosphate + uracil. Its function is as follows. Catalyzes the conversion of AMP and phosphate to adenine and ribose 1,5-bisphosphate (R15P). Exhibits phosphorylase activity toward CMP and UMP in addition to AMP. Functions in an archaeal AMP degradation pathway, together with R15P isomerase and RubisCO. This chain is AMP phosphorylase, found in Hyperthermus butylicus (strain DSM 5456 / JCM 9403 / PLM1-5).